Reading from the N-terminus, the 276-residue chain is uncharacterized protein (276 aa).

The AB hydrolase-1 domain occupies 20–137; it reads PVLIFIPGAN…PPINTFLPDS (118 aa).

Belongs to the AB hydrolase superfamily.

This is an uncharacterized protein from Staphylococcus aureus (strain MRSA252).